Reading from the N-terminus, the 95-residue chain is Small ribosomal subunit protein bS6 (95 aa).

The protein belongs to the bacterial ribosomal protein bS6 family.

In terms of biological role, binds together with bS18 to 16S ribosomal RNA. The protein is Small ribosomal subunit protein bS6 of Symbiobacterium thermophilum (strain DSM 24528 / JCM 14929 / IAM 14863 / T).